The sequence spans 118 residues: MPFSKLGRNKSQRRALLRTLMTDLIVQEKIMITESKAKELQKLADKMVTLSKKNTLHTRRQAKRHLFDEKINDDTTVLQKLFKDISSKYLDRQGGYTRVIKTVPRRGDGAPMAIIAFV.

Belongs to the bacterial ribosomal protein bL17 family. Part of the 50S ribosomal subunit. Contacts protein L32.

This Onion yellows phytoplasma (strain OY-M) protein is Large ribosomal subunit protein bL17.